A 221-amino-acid polypeptide reads, in one-letter code: MTKTADLKGSNFTLSVLHLPNDDVALALSMLEQKVAQAPSFFASAPVVVNIENVSNEINFVELKSGVERTGMIPVGITGCKDKQKQAQATAAGFAVMTSFTPQQVTQKANMQPTKVVKTPIRSGQQIYAKDADLVILNHVSPGAEVIADGSIHIHGTLRGRAIAGASGQAEAKVFCKNLQAELISIAGNYWLSDQIDKEYWHQNVMITMVEDRIQIDTLTL.

It belongs to the MinC family. As to quaternary structure, interacts with MinD and FtsZ.

In terms of biological role, cell division inhibitor that blocks the formation of polar Z ring septums. Rapidly oscillates between the poles of the cell to destabilize FtsZ filaments that have formed before they mature into polar Z rings. Prevents FtsZ polymerization. This Aliivibrio fischeri (strain ATCC 700601 / ES114) (Vibrio fischeri) protein is Probable septum site-determining protein MinC.